The following is a 185-amino-acid chain: MASTQAMGMTEQQKKSVDEMVEKATNMGVNVQAQNSAVVSMINQTNVSMTFNENHNWSGSVVGTGYPKSIPTKQSRQFIHQGDAKDGSQGAVVYYGSNANGEPCGWLLAWCAPTNVTPTKPNRVYVDCGAQSKFDTISWDTIKAKLDVGPATTNFTDVDTETTIAAGVTSTGSFASVGAAFGLST.

This sequence belongs to the jasmonate-induced protein family.

In Atriplex canescens (Fourwing saltbush), this protein is Jasmonate-induced protein homolog.